Consider the following 152-residue polypeptide: Transcription factor XE1.1 (152 aa).

Disordered stretches follow at residues arginine 1 to alanine 54 and lysine 123 to methionine 152. Composition is skewed to basic and acidic residues over residues aspartate 7–serine 22 and proline 38–alanine 54. The bHLH domain maps to glutamate 47–leucine 100. A class A specific domain region spans residues glutamine 102–serine 125. The segment covering threonine 143–methionine 152 has biased composition (polar residues).

In terms of assembly, efficient DNA binding requires dimerization with another bHLH protein. Forms homo- or heterooligomers with myogenin, E12 and ITF2 proteins.

Its subcellular location is the nucleus. In terms of biological role, transcriptional regulator. Involved in the initiation of neuronal differentiation. Activates transcription by binding to the E box-containing promoter. The sequence is that of Transcription factor XE1.1 from Xenopus laevis (African clawed frog).